A 315-amino-acid chain; its full sequence is Methionyl-tRNA formyltransferase (315 aa).

(6S)-5,6,7,8-tetrahydrofolate is bound at residue 113 to 116 (SLLP).

It belongs to the Fmt family.

The enzyme catalyses L-methionyl-tRNA(fMet) + (6R)-10-formyltetrahydrofolate = N-formyl-L-methionyl-tRNA(fMet) + (6S)-5,6,7,8-tetrahydrofolate + H(+). Attaches a formyl group to the free amino group of methionyl-tRNA(fMet). The formyl group appears to play a dual role in the initiator identity of N-formylmethionyl-tRNA by promoting its recognition by IF2 and preventing the misappropriation of this tRNA by the elongation apparatus. This chain is Methionyl-tRNA formyltransferase, found in Escherichia coli O139:H28 (strain E24377A / ETEC).